The primary structure comprises 148 residues: uncharacterized protein (148 aa).

This sequence to A.tumefaciens Atu0565/AGR_C_992.

This is an uncharacterized protein from Rhizobium meliloti (strain 1021) (Ensifer meliloti).